A 290-amino-acid chain; its full sequence is Fructose-1,6-bisphosphatase class 1 (290 aa).

The Mg(2+) site is built by glutamate 78, aspartate 96, leucine 98, and aspartate 99. Residues 99-102 (DGSS), tyrosine 201, and lysine 226 contribute to the substrate site. Glutamate 232 lines the Mg(2+) pocket.

The protein belongs to the FBPase class 1 family. In terms of assembly, homotetramer. Mg(2+) serves as cofactor.

It is found in the cytoplasm. It carries out the reaction beta-D-fructose 1,6-bisphosphate + H2O = beta-D-fructose 6-phosphate + phosphate. It participates in carbohydrate biosynthesis; gluconeogenesis. The chain is Fructose-1,6-bisphosphatase class 1 from Helicobacter pylori (strain ATCC 700392 / 26695) (Campylobacter pylori).